The following is a 392-amino-acid chain: Isocitrate dehydrogenase [NAD] subunit gamma, mitochondrial (392 aa).

A mitochondrion-targeting transit peptide spans 1–39 (MALKVATAAGGAVKAALRPALLWRPWEVLGSHEAPRRSF). Residues T119 and N132 each coordinate citrate. Substrate is bound by residues R135, R166, and D253. D253 contributes to the Mn(2+) binding site. Residues N311, T312, and N323 each contribute to the ADP site.

Belongs to the isocitrate and isopropylmalate dehydrogenases family. As to quaternary structure, heterooligomer of subunits alpha (IDH3A), beta (IDH3B), and gamma (IDH3G) in the apparent ratio of 2:1:1. The heterodimer containing one IDH3A and one IDH3B subunit and the heterodimer containing one IDH3A and one IDH3G subunit assemble into a heterotetramer (which contains two subunits of IDH3A, one of IDH3B and one of IDH3G) and further into the heterooctamer. Mg(2+) serves as cofactor. Requires Mn(2+) as cofactor.

Its subcellular location is the mitochondrion. The heterotetramer and the heterodimer composed of IDH3A and IDH3G subunits can be allosterically activated by citrate (CIT) or/and ADP, and the two activators can act independently or synergistically. The heterodimer composed of IDH3A and IDH3B subunits cannot be allosterically regulated and the allosteric regulation of the heterotetramer is through the IDH3G subunit and not the IDH3B subunit. The IDH3G subunit contains the allosteric site which consists of a CIT-binding site and an ADP-binding site, and the binding of CIT and ADP causes conformational changes at the allosteric site which are transmitted to the active site in the catalytic subunit (IDH3A) through a cascade of conformational changes at the heterodimer interface, leading to stabilization of the isocitrate-binding at the active site and thus activation of the enzyme. ATP can activate the heterotetramer and the heterodimer composed of IDH3A and IDH3G subunits at low concentrations but inhibits their activities at high concentrations, whereas ATP exhibits only inhibitory effect on the heterodimer composed of IDH3A and IDH3B subunits. In terms of biological role, regulatory subunit which plays a role in the allosteric regulation of the enzyme catalyzing the decarboxylation of isocitrate (ICT) into alpha-ketoglutarate. The heterodimer composed of the alpha (IDH3A) and beta (IDH3B) subunits and the heterodimer composed of the alpha (IDH3A) and gamma (IDH3G) subunits, have considerable basal activity but the full activity of the heterotetramer (containing two subunits of IDH3A, one of IDH3B and one of IDH3G) requires the assembly and cooperative function of both heterodimers. The polypeptide is Isocitrate dehydrogenase [NAD] subunit gamma, mitochondrial (IDH3G) (Bos taurus (Bovine)).